We begin with the raw amino-acid sequence, 321 residues long: Putative zinc finger CCCH domain-containing protein 9 (321 aa).

2 disordered regions span residues 1–59 (MADA…PGKK) and 181–269 (REAE…NLQE). Residues 10-29 (EAERRSDETESRSIKEPKEK) are compositionally biased toward basic and acidic residues. The C3H1-type zinc-finger motif lies at 55–83 (RPGKKDCQFYLKNGLCRYRSSCRFNHPTQ). Residues 164-290 (TEWRFERERM…EARLRLEQIR (127 aa)) adopt a coiled-coil conformation. 2 stretches are compositionally biased toward basic and acidic residues: residues 181–224 (REAE…REAQ) and 231–244 (RQRD…REAQ).

This Arabidopsis thaliana (Mouse-ear cress) protein is Putative zinc finger CCCH domain-containing protein 9.